The sequence spans 215 residues: Endoplasmic reticulum vesicle protein 25 (215 aa).

Residues 1 to 21 (MQSLITYIALVFSLFVSSAIG) form the signal peptide. The Lumenal segment spans residues 22–184 (LHLEVPALPN…TNESTNSRVK (163 aa)). The 92-residue stretch at 34–125 (PVCIRDFVQE…VRSVELDIES (92 aa)) folds into the GOLD domain. The chain crosses the membrane as a helical span at residues 185–205 (WFSIVVIASLVGFGVWQIQYL). Residues 206 to 215 (RHYFKVKHII) are Cytoplasmic-facing.

This sequence belongs to the EMP24/GP25L family.

Its subcellular location is the endoplasmic reticulum membrane. The protein resides in the golgi apparatus membrane. In terms of biological role, constituent of COPII-coated endoplasmic reticulum-derived transport vesicles. Required for efficient transport of a subset of secretory proteins to the Golgi. Facilitates retrograde transport from the Golgi to the endoplasmic reticulum. The chain is Endoplasmic reticulum vesicle protein 25 (ERV25) from Candida albicans (strain SC5314 / ATCC MYA-2876) (Yeast).